The sequence spans 153 residues: Endoribonuclease YbeY (153 aa).

His-118, His-122, and His-128 together coordinate Zn(2+).

It belongs to the endoribonuclease YbeY family. It depends on Zn(2+) as a cofactor.

Its subcellular location is the cytoplasm. Its function is as follows. Single strand-specific metallo-endoribonuclease involved in late-stage 70S ribosome quality control and in maturation of the 3' terminus of the 16S rRNA. The sequence is that of Endoribonuclease YbeY from Clostridioides difficile (strain 630) (Peptoclostridium difficile).